A 143-amino-acid chain; its full sequence is Transcription antitermination protein NusB (143 aa).

It belongs to the NusB family.

Its function is as follows. Involved in transcription antitermination. Required for transcription of ribosomal RNA (rRNA) genes. Binds specifically to the boxA antiterminator sequence of the ribosomal RNA (rrn) operons. This is Transcription antitermination protein NusB from Clostridium botulinum (strain Kyoto / Type A2).